Consider the following 409-residue polypeptide: MNAEIIAVGTEILLGDIVNTNAQFLSKKLAEMGISVYHQSVVGDNGNRLKEELTESFKRSNIVITTGGLGPTKDDLTKEIGAEYFNRKMFLHEESLKNIKNYFKKQGKILNENNEKQAYFPEKSTILPNNFGTAPGCIMEENDKFLIMLPGPPKEIIPMFKDYVIPYLKKFNEGVLISKVLRICGMGESKVVTEINHLIENQTNPTVAPYAKDNEVTLRLTAKAKNEKEALSLIYPLEKEIRDILGNNIYGTDSDTLEGVIGKFLIENNLYIATAESCTGGLLCGRLVNYPGISKCLVEGIVSYSNNSKMNRIGVKKETLNKFGAVSEETAIEMAKGVANSSGADIGISTTGIAGPSGGTYEKPVGLVYIGYYIKGKSFAKKFIFPGDRQSMRNKTVTVALDYLRKNLI.

It belongs to the CinA family.

The polypeptide is Putative competence-damage inducible protein (Clostridium tetani (strain Massachusetts / E88)).